Consider the following 119-residue polypeptide: Ribonuclease P protein component (119 aa).

This sequence belongs to the RnpA family. Consists of a catalytic RNA component (M1 or rnpB) and a protein subunit.

The catalysed reaction is Endonucleolytic cleavage of RNA, removing 5'-extranucleotides from tRNA precursor.. Its function is as follows. RNaseP catalyzes the removal of the 5'-leader sequence from pre-tRNA to produce the mature 5'-terminus. It can also cleave other RNA substrates such as 4.5S RNA. The protein component plays an auxiliary but essential role in vivo by binding to the 5'-leader sequence and broadening the substrate specificity of the ribozyme. In Aeromonas salmonicida (strain A449), this protein is Ribonuclease P protein component.